The primary structure comprises 163 residues: CASP-like protein 1C3 (163 aa).

The Cytoplasmic segment spans residues 1–6; the sequence is MAKIKK. Residues 7–27 traverse the membrane as a helical segment; that stretch reads IFTNFLRLLALAATVVAIVFM. Topologically, residues 28–52 are extracellular; that stretch reads VTSHDSAQVLNLTFTVKYSNTPVFK. Asn-38 carries N-linked (GlcNAc...) asparagine glycosylation. The chain crosses the membrane as a helical span at residues 53–73; the sequence is YFVIAEAIAGGYIVISILLSF. Topologically, residues 74–79 are cytoplasmic; sequence KSLFWR. Residues 80-100 traverse the membrane as a helical segment; it reads LLVILDMVTAVLLTSSISAAL. Over 101 to 128 the chain is Extracellular; it reads AIAQVGKKGNTHAGWLPVCEQVPDFCDQ. Residues 129–149 form a helical membrane-spanning segment; the sequence is VTIALIAGFAAAIIYFVLLLC. The Cytoplasmic portion of the chain corresponds to 150–163; the sequence is SLYVVLSPIFVVTP.

The protein belongs to the Casparian strip membrane proteins (CASP) family. In terms of assembly, homodimer and heterodimers.

It is found in the cell membrane. The protein is CASP-like protein 1C3 of Populus trichocarpa (Western balsam poplar).